The chain runs to 78 residues: Glycophorin-E (78 aa).

An N-terminal signal peptide occupies residues 1–19 (MYGKIIFVLLLSGIVSISA). Residues 20 to 52 (SSTTGVAMHTSTSSSVTKSYISSQTNGITLINW) lie on the Extracellular side of the membrane. The chain crosses the membrane as a helical span at residues 53–73 (WAMARVIFEVMLVVVGMIILI). Over 74-78 (SYCIR) the chain is Cytoplasmic.

Belongs to the glycophorin-A family. In terms of processing, the N-terminal extracellular domain is heavily glycosylated on serine and threonine residues. Erythrocytes.

The protein resides in the membrane. Functionally, this protein is a minor sialoglycoprotein in human erythrocyte membranes. The sequence is that of Glycophorin-E (GYPE) from Homo sapiens (Human).